The following is a 351-amino-acid chain: S-adenosylmethionine:tRNA ribosyltransferase-isomerase (351 aa).

The protein belongs to the QueA family. Monomer.

It localises to the cytoplasm. It carries out the reaction 7-aminomethyl-7-carbaguanosine(34) in tRNA + S-adenosyl-L-methionine = epoxyqueuosine(34) in tRNA + adenine + L-methionine + 2 H(+). It functions in the pathway tRNA modification; tRNA-queuosine biosynthesis. Its function is as follows. Transfers and isomerizes the ribose moiety from AdoMet to the 7-aminomethyl group of 7-deazaguanine (preQ1-tRNA) to give epoxyqueuosine (oQ-tRNA). In Hyphomonas neptunium (strain ATCC 15444), this protein is S-adenosylmethionine:tRNA ribosyltransferase-isomerase.